The primary structure comprises 393 residues: S-adenosylmethionine synthase (393 aa).

His-16 serves as a coordination point for ATP. Mg(2+) is bound at residue Asp-18. Glu-44 serves as a coordination point for K(+). Positions 57 and 100 each coordinate L-methionine. The flexible loop stretch occupies residues 100–110 (QSNDIAQGVDH). ATP-binding positions include 167–169 (DAK), 238–239 (RF), Asp-247, 253–254 (RK), Ala-270, and Lys-274. L-methionine is bound at residue Asp-247. Residue Lys-278 participates in L-methionine binding.

This sequence belongs to the AdoMet synthase family. As to quaternary structure, homotetramer; dimer of dimers. It depends on Mg(2+) as a cofactor. K(+) serves as cofactor.

It is found in the cytoplasm. It catalyses the reaction L-methionine + ATP + H2O = S-adenosyl-L-methionine + phosphate + diphosphate. It participates in amino-acid biosynthesis; S-adenosyl-L-methionine biosynthesis; S-adenosyl-L-methionine from L-methionine: step 1/1. Its function is as follows. Catalyzes the formation of S-adenosylmethionine (AdoMet) from methionine and ATP. The overall synthetic reaction is composed of two sequential steps, AdoMet formation and the subsequent tripolyphosphate hydrolysis which occurs prior to release of AdoMet from the enzyme. The chain is S-adenosylmethionine synthase from Polaromonas sp. (strain JS666 / ATCC BAA-500).